The sequence spans 218 residues: Protein N-lysine methyltransferase METTL21A (218 aa).

S-adenosyl-L-methionine is bound by residues tryptophan 47, 73-75 (GAG), aspartate 94, tryptophan 125, and alanine 143.

Belongs to the methyltransferase superfamily. METTL21 family. In terms of assembly, interacts with heat shock protein 70 family members; at least some of these proteins are methylation substrates.

The protein resides in the cytoplasm. It carries out the reaction L-lysyl-[protein] + 3 S-adenosyl-L-methionine = N(6),N(6),N(6)-trimethyl-L-lysyl-[protein] + 3 S-adenosyl-L-homocysteine + 3 H(+). Functionally, protein-lysine methyltransferase that selectively trimethylates residues in heat shock protein 70 (HSP70) family members. Contributes to the in vivo trimethylation of Lys residues in HSPA1 and HSPA8. In vitro methylates 'Lys-561' in HSPA1, 'Lys-564' in HSPA2, 'Lys-585' in HSPA5, 'Lys-563' in HSPA6 and 'Lys-561' in HSPA8. The sequence is that of Protein N-lysine methyltransferase METTL21A (METTL21A) from Homo sapiens (Human).